Here is a 617-residue protein sequence, read N- to C-terminus: Na(+)/H(+) antiporter NhaA 1 (617 aa).

The segment at 1–26 (MTVTEPATQRGFPLLPSRLSRGSKAT) is disordered. A na(+)/H(+) antiporter NhaA region spans residues 1–433 (MTVTEPATQR…GWAIFRITDW (433 aa)). The next 11 helical transmembrane spans lie at 33-53 (AAAL…SPWA), 75-95 (MTVK…IVGL), 113-133 (AVPV…FLAF), 141-161 (HAWG…LAII), 171-191 (LFLL…IAVL), 198-218 (VAPL…RYLP), 234-254 (IALY…ALLI), 304-324 (VSPV…AGVL), 341-361 (GIVA…TWLI), 378-398 (IAGG…IVDI), and 411-431 (IGVL…FRIT). Positions 434 to 617 (LSPPEPVGLK…LIRALEAGRG (184 aa)) constitute a Thioredoxin domain.

In the N-terminal section; belongs to the NhaA Na(+)/H(+) (TC 2.A.33) antiporter family.

The protein resides in the cell membrane. It carries out the reaction Na(+)(in) + 2 H(+)(out) = Na(+)(out) + 2 H(+)(in). Its function is as follows. Na(+)/H(+) antiporter that extrudes sodium in exchange for external protons. The chain is Na(+)/H(+) antiporter NhaA 1 from Mycolicibacterium gilvum (strain PYR-GCK) (Mycobacterium gilvum (strain PYR-GCK)).